The primary structure comprises 527 residues: Probable bifunctional tRNA threonylcarbamoyladenosine biosynthesis protein (527 aa).

A kae1 region spans residues 1 to 323 (MPDIMPDDGL…YRADEVEVAW (323 aa)). Residues histidine 110, histidine 114, and tyrosine 131 each coordinate Fe cation. L-threonylcarbamoyladenylate contacts are provided by residues 131-135 (YASGA), aspartate 163, glycine 176, glutamate 180, and asparagine 256. Residue aspartate 284 coordinates Fe cation. The region spanning 333–527 (IGPHEGGVAR…HEVELRGRYL (195 aa)) is the Protein kinase domain. ATP-binding positions include 340-348 (VARGAEAVV) and lysine 357. Residue aspartate 444 is the Proton acceptor; for kinase activity of the active site.

The protein in the N-terminal section; belongs to the KAE1 / TsaD family. In the C-terminal section; belongs to the protein kinase superfamily. Tyr protein kinase family. BUD32 subfamily. Component of the KEOPS complex that consists of Kae1, Bud32, Cgi121 and Pcc1; the whole complex dimerizes. Fe(2+) serves as cofactor.

It localises to the cytoplasm. It carries out the reaction L-seryl-[protein] + ATP = O-phospho-L-seryl-[protein] + ADP + H(+). The catalysed reaction is L-threonyl-[protein] + ATP = O-phospho-L-threonyl-[protein] + ADP + H(+). It catalyses the reaction L-threonylcarbamoyladenylate + adenosine(37) in tRNA = N(6)-L-threonylcarbamoyladenosine(37) in tRNA + AMP + H(+). Its function is as follows. Required for the formation of a threonylcarbamoyl group on adenosine at position 37 (t(6)A37) in tRNAs that read codons beginning with adenine. Is a component of the KEOPS complex that is probably involved in the transfer of the threonylcarbamoyl moiety of threonylcarbamoyl-AMP (TC-AMP) to the N6 group of A37. The Kae1 domain likely plays a direct catalytic role in this reaction. The Bud32 domain probably displays kinase activity that regulates Kae1 function. The chain is Probable bifunctional tRNA threonylcarbamoyladenosine biosynthesis protein from Methanoculleus marisnigri (strain ATCC 35101 / DSM 1498 / JR1).